Here is a 213-residue protein sequence, read N- to C-terminus: MNWLNSEAFVLFDQHIIWSDMVGNILGLITLALGFRRSLWTWPVQFLSGLVLFGAFYGHLTGSAGKQAVVMAVALYGWYQWNRGTDKAADGKVSVRFATWAERGAMIAAAAVGTVAVALLFKAYPSLSWDPWPDAYIFVGTIVAMYAQARGMVEFWFAWLLVDLVGVPLNFANGYAFSGFVYVIYGALVLWGMRDWWLRSRRDSRPVLEGAPA.

A run of 5 helical transmembrane segments spans residues 15 to 35 (HIIWSDMVGNILGLITLALGF), 38 to 58 (SLWTWPVQFLSGLVLFGAFYG), 107 to 129 (IAAAAVGTVAVALLFKAYPSLSW), 136 to 158 (YIFVGTIVAMYAQARGMVEFWFA), and 171 to 193 (FANGYAFSGFVYVIYGALVLWGM).

Belongs to the nicotinamide ribonucleoside (NR) uptake permease (TC 4.B.1) family.

The protein resides in the cell membrane. Functionally, transports riboflavin and roseoflavin. Can also transport FMN and FAD. May confer roseoflavin resistance to S.davawensis, which naturally produces this antibiotic during stationary growth phase. The sequence is that of Riboflavin/roseoflavin transporter RibM from Streptomyces davaonensis (strain DSM 101723 / JCM 4913 / KCC S-0913 / 768).